The sequence spans 510 residues: Nectin-4 (510 aa).

The signal sequence occupies residues 1–31 (MPLSLGAEMWGPEAWLLLLLLLASFTGRCPA). Positions 32 to 144 (GELETSDVVT…GSFQARLRLR (113 aa)) constitute an Ig-like V-type domain. Residues 32-349 (GELETSDVVT…GKQVDLVSAS (318 aa)) lie on the Extracellular side of the membrane. Cystine bridges form between cysteine 52–cysteine 127, cysteine 171–cysteine 223, and cysteine 270–cysteine 315. Ig-like C2-type domains follow at residues 148–237 (PPLP…QRIT) and 248–331 (ASVR…VTVD). N-linked (GlcNAc...) asparagine glycosylation is present at asparagine 281. The chain crosses the membrane as a helical span at residues 350-370 (VVVVGVIAALLFCLLVVVVVL). Topologically, residues 371–510 (MSRYHRRKAQ…IYINGRGHLV (140 aa)) are cytoplasmic. Residues 399–412 (RRLHSHHTDPRSQP) show a composition bias toward basic and acidic residues. Disordered stretches follow at residues 399–447 (RRLH…SYST) and 457–476 (QTEL…DQDE).

This sequence belongs to the nectin family. In terms of assembly, self-associates. Interacts via its Ig-like V-type domain with NECTIN1 Ig-like V-type domain. Interacts via its C-terminus with AFDN. (Microbial infection) Interacts (via N-terminus) with measles virus hemagglutinin protein. In terms of processing, the soluble form is produced by proteolytic cleavage at the cell surface (shedding), probably by ADAM17/TACE. In terms of tissue distribution, predominantly expressed in placenta. Not detected in normal breast epithelium but expressed in breast carcinoma.

Its subcellular location is the cell membrane. It localises to the cell junction. The protein resides in the adherens junction. The protein localises to the secreted. Seems to be involved in cell adhesion through trans-homophilic and -heterophilic interactions, the latter including specifically interactions with NECTIN1. Does not act as receptor for alpha-herpesvirus entry into cells. In terms of biological role, (Microbial infection) Acts as a receptor for measles virus. This Homo sapiens (Human) protein is Nectin-4.